Consider the following 314-residue polypeptide: Aspartate carbamoyltransferase catalytic subunit (314 aa).

The carbamoyl phosphate site is built by arginine 58 and threonine 59. Residue lysine 86 participates in L-aspartate binding. The carbamoyl phosphate site is built by arginine 108, histidine 136, and glutamine 139. L-aspartate-binding residues include arginine 169 and arginine 223. The carbamoyl phosphate site is built by glycine 264 and proline 265.

This sequence belongs to the aspartate/ornithine carbamoyltransferase superfamily. ATCase family. In terms of assembly, heterododecamer (2C3:3R2) of six catalytic PyrB chains organized as two trimers (C3), and six regulatory PyrI chains organized as three dimers (R2).

The catalysed reaction is carbamoyl phosphate + L-aspartate = N-carbamoyl-L-aspartate + phosphate + H(+). It participates in pyrimidine metabolism; UMP biosynthesis via de novo pathway; (S)-dihydroorotate from bicarbonate: step 2/3. Functionally, catalyzes the condensation of carbamoyl phosphate and aspartate to form carbamoyl aspartate and inorganic phosphate, the committed step in the de novo pyrimidine nucleotide biosynthesis pathway. The polypeptide is Aspartate carbamoyltransferase catalytic subunit (Opitutus terrae (strain DSM 11246 / JCM 15787 / PB90-1)).